The chain runs to 178 residues: Putative type II secretion system M-type protein YghD (178 aa).

Over 1–39 the chain is Cytoplasmic; it reads MLRDKFIHYFQQWRERQLSRGEHWLAQHLAGRSPREKGM. The helical transmembrane segment at 40–60 threads the bilayer; that stretch reads LLAAVVFLFSVGYYVLIWQPL. At 61–178 the chain is on the periplasmic side; sequence SERIEQQETI…NVQRLEFGRG (118 aa).

This sequence belongs to the GSP M family.

Its subcellular location is the cell inner membrane. Involved in a type II secretion system (T2SS, formerly general secretion pathway, GSP) for the export of folded proteins across the outer membrane. The protein is Putative type II secretion system M-type protein YghD (yghD) of Escherichia coli (strain K12).